Reading from the N-terminus, the 102-residue chain is Large ribosomal subunit protein bL21 (102 aa).

This sequence belongs to the bacterial ribosomal protein bL21 family. Part of the 50S ribosomal subunit. Contacts protein L20.

Its function is as follows. This protein binds to 23S rRNA in the presence of protein L20. The sequence is that of Large ribosomal subunit protein bL21 from Geobacter metallireducens (strain ATCC 53774 / DSM 7210 / GS-15).